We begin with the raw amino-acid sequence, 113 residues long: Large ribosomal subunit protein uL22 (113 aa).

Belongs to the universal ribosomal protein uL22 family. Part of the 50S ribosomal subunit.

This protein binds specifically to 23S rRNA; its binding is stimulated by other ribosomal proteins, e.g. L4, L17, and L20. It is important during the early stages of 50S assembly. It makes multiple contacts with different domains of the 23S rRNA in the assembled 50S subunit and ribosome. In terms of biological role, the globular domain of the protein is located near the polypeptide exit tunnel on the outside of the subunit, while an extended beta-hairpin is found that lines the wall of the exit tunnel in the center of the 70S ribosome. The chain is Large ribosomal subunit protein uL22 from Neorickettsia sennetsu (strain ATCC VR-367 / Miyayama) (Ehrlichia sennetsu).